Consider the following 475-residue polypeptide: Exodeoxyribonuclease 7 large subunit (475 aa).

It belongs to the XseA family. In terms of assembly, heterooligomer composed of large and small subunits.

It localises to the cytoplasm. The enzyme catalyses Exonucleolytic cleavage in either 5'- to 3'- or 3'- to 5'-direction to yield nucleoside 5'-phosphates.. Functionally, bidirectionally degrades single-stranded DNA into large acid-insoluble oligonucleotides, which are then degraded further into small acid-soluble oligonucleotides. This Bartonella henselae (strain ATCC 49882 / DSM 28221 / CCUG 30454 / Houston 1) (Rochalimaea henselae) protein is Exodeoxyribonuclease 7 large subunit.